Here is a 142-residue protein sequence, read N- to C-terminus: Glia maturation factor beta (142 aa).

The residue at position 2 (Ser-2) is an N-acetylserine. Residues 4–139 (SLVVCDVAED…TEEWLREKLG (136 aa)) form the ADF-H domain.

The protein belongs to the actin-binding proteins ADF family. GMF subfamily. In terms of processing, phosphorylated; stimulated by phorbol ester.

This protein causes differentiation of brain cells, stimulation of neural regeneration, and inhibition of proliferation of tumor cells. The polypeptide is Glia maturation factor beta (Gmfb) (Mus musculus (Mouse)).